A 77-amino-acid chain; its full sequence is UPF0291 protein YnzC (77 aa).

Residues 56 to 77 form a disordered region; the sequence is DPEGNDVTPEKLKREQRNNKLH. Over residues 63-77 the composition is skewed to basic and acidic residues; sequence TPEKLKREQRNNKLH.

Belongs to the UPF0291 family.

It localises to the cytoplasm. The sequence is that of UPF0291 protein YnzC (ynzC) from Bacillus subtilis (strain 168).